The primary structure comprises 615 residues: 9-cis-epoxycarotenoid dioxygenase NCED1, chloroplastic (615 aa).

A chloroplast-targeting transit peptide spans 1-41; the sequence is MPSPASNTWINTTLPSSCSSPFKDLASTSSSPTTLLPFKKR. Disordered stretches follow at residues 20–45 and 62–101; these read SPFK…SSSN and YQPT…KQPF. 2 stretches are compositionally biased toward low complexity: residues 27–37 and 64–86; these read STSSSPTTLLP and PTST…TTTT. 3 residues coordinate Fe cation: H316, H365, and H430. A coiled-coil region spans residues 571–592; it reads KEWKSELQIVNAQNLKLEASIK. H602 contributes to the Fe cation binding site.

It belongs to the carotenoid oxygenase family. It depends on Fe(2+) as a cofactor.

The protein localises to the plastid. It localises to the chloroplast thylakoid membrane. The catalysed reaction is a 9-cis-epoxycarotenoid + O2 = a 12'-apo-carotenal + 2-cis,4-trans-xanthoxin. The enzyme catalyses 9-cis-violaxanthin + O2 = (3S,5R,6S)-5,6-epoxy-3-hydroxy-5,6-dihydro-12'-apo-beta-caroten-12'-al + 2-cis,4-trans-xanthoxin. It carries out the reaction 9'-cis-neoxanthin + O2 = (3S,5R,6R)-3,5-dihydroxy-6,7-didehydro-5,6-dihydro-12'-apo-beta-caroten-12'-al + 2-cis,4-trans-xanthoxin. Its function is as follows. Has a 11,12(11',12') 9-cis epoxycarotenoid cleavage activity. Catalyzes the first step of abscisic-acid biosynthesis from carotenoids, in response to water stress. Active on 9-cis-violaxanthin and 9'-cis-neoxanthin, but not on the all-trans isomers of violaxanthin and neoxanthin. In Phaseolus vulgaris (Kidney bean), this protein is 9-cis-epoxycarotenoid dioxygenase NCED1, chloroplastic (NCED1).